Here is a 118-residue protein sequence, read N- to C-terminus: Large ribosomal subunit protein bL19 (118 aa).

Belongs to the bacterial ribosomal protein bL19 family.

Its function is as follows. This protein is located at the 30S-50S ribosomal subunit interface and may play a role in the structure and function of the aminoacyl-tRNA binding site. The polypeptide is Large ribosomal subunit protein bL19 (Campylobacter fetus subsp. fetus (strain 82-40)).